A 746-amino-acid polypeptide reads, in one-letter code: Actin filament-associated protein 1-like 1 (746 aa).

The disordered stretch occupies residues 88-206; that stretch reads EDQKKEPEAN…RLTHQWPSEE (119 aa). A compositionally biased stretch (polar residues) spans 98 to 107; that stretch reads HTVTKPSKTD. Residues 108-119 are compositionally biased toward pro residues; sequence SPPPLPNTPPPE. Over residues 139–148 the composition is skewed to low complexity; that stretch reads SRSSSSPPNS. One can recognise a PH 1 domain in the interval 214–310; sequence DCHICAFLLR…WLHVVRDVTG (97 aa). The disordered stretch occupies residues 336 to 371; the sequence is EKQTSDSDSMPSGESARDIRENGKPKRGALSELTGT. The segment covering 350–359 has biased composition (basic and acidic residues); sequence SARDIRENGK. The PH 2 domain maps to 406 to 497; the sequence is RCGYVGVLVN…WLGVLLAETG (92 aa). Disordered regions lie at residues 539 to 596 and 723 to 746; these read EVPF…TRAQ and PSIY…KKGT. Positions 562-575 are enriched in polar residues; that stretch reads SFSSSDTGKPSPQI. Residues 591–682 adopt a coiled-coil conformation; that stretch reads GKTRAQEDAR…VKENLKKSLA (92 aa). The span at 736–746 shows a compositional bias: basic and acidic residues; that stretch reads KAKEWESKKGT.

The protein resides in the cytoplasm. It is found in the cell projection. It localises to the podosome. Its subcellular location is the invadopodium. The protein localises to the cytoskeleton. The protein resides in the stress fiber. May be involved in podosome and invadosome formation. The chain is Actin filament-associated protein 1-like 1 (afap1l1) from Danio rerio (Zebrafish).